The chain runs to 479 residues: MSFQAPRRLLELAGQSLLRDQALAISVLDELPRELFPPLFVEAFTSRRCEVLKVMVQAWPFPCLPLGSLMKTPDLEILHYVVDGIDCLLAQKVRPRRWKLQVLEMRDVDENFWTIWSGARLLSCSPEAMSKRQTVEDCPRTGEKQPLKVFMDVCLKEKFMDEDLSFFSGWVQHRRGSVHLCCTKVVNYSMSILNFRNILETVYPDSIQVLEIWNMCWLCMIVEFSRYLSQMRNLRKLFISDGCRYLLSSDSQEQLVAEFSSVLLRLENLQMLYVRRVCFFRGHLDQLIRCLRSPLETLALTYGFLEEEDLKCLPRYPSLSQLKQLNLSHGALRFIRLEPLRALLEKVAATLQTLFLVDCGIGYSKLRVILPALSRCSNLTTFCFHGNDTSMDALKDLLRHTGRLSNLSLETYPAPRESLDNRGRVILELLTPLQAELMRILREVREPKRIFFGPVSCPCCGTSPTEQLESNFCLWGRPA.

The stretch at 15-38 (QSLLRDQALAISVLDELPRELFPP) is one LRR 1 repeat. An LRR 1; degenerate repeat occupies 97–124 (RWKLQVLEMRDVDENFWTIWSGARLLSC). One copy of the LRR 2; degenerate repeat lies at 179–203 (HLCCTKVVNYSMSILNFRNILETVY). An LRR 3; degenerate repeat occupies 204-230 (PDSIQVLEIWNMCWLCMIVEFSRYLSQ). Residues 231 to 265 (MRNLRKLFISDGCRYLLSSDSQEQLVAEFSSVLLR) form an LRR 4; degenerate repeat. 5 LRR repeats span residues 266 to 291 (LENL…IRCL), 292 to 323 (RSPL…SQLK), 324 to 342 (QLNL…PLRA), 348 to 375 (AATL…ALSR), and 376 to 400 (CSNL…LLRH).

It belongs to the PRAME family.

This is PRAME family member 18 from Homo sapiens (Human).